The chain runs to 218 residues: Adenylate kinase (218 aa).

10 to 15 (GAGKGT) provides a ligand contact to ATP. Residues 30-59 (STGDMLRAAVKAGTPLGLEAKKVMDAGGLV) are NMP. AMP-binding positions include T31, R36, 57–59 (GLV), 85–88 (GFPR), and Q92. Residues 122 to 159 (GRRVHPASGRVYHTKYNPPKVEGKDDETGDELVQRDDD) form an LID region. ATP is bound by residues R123 and 132-133 (VY). The tract at residues 139 to 160 (PPKVEGKDDETGDELVQRDDDQ) is disordered. R156 and R167 together coordinate AMP. G203 contributes to the ATP binding site.

It belongs to the adenylate kinase family. In terms of assembly, monomer.

It is found in the cytoplasm. It carries out the reaction AMP + ATP = 2 ADP. It participates in purine metabolism; AMP biosynthesis via salvage pathway; AMP from ADP: step 1/1. Functionally, catalyzes the reversible transfer of the terminal phosphate group between ATP and AMP. Plays an important role in cellular energy homeostasis and in adenine nucleotide metabolism. This Alcanivorax borkumensis (strain ATCC 700651 / DSM 11573 / NCIMB 13689 / SK2) protein is Adenylate kinase.